We begin with the raw amino-acid sequence, 285 residues long: Baculoviral IAP repeat-containing protein 7 (285 aa).

The interval 18 to 47 is disordered; sequence ESRARDSVRGPELSHREDGSGRTQEQDKPH. The span at 19-47 shows a compositional bias: basic and acidic residues; the sequence is SRARDSVRGPELSHREDGSGRTQEQDKPH. The BIR repeat unit spans residues 96-161; sequence RLASFYDWPS…RWFPRCQFLL (66 aa). Residues Cys130, Cys133, His150, and Cys157 each coordinate Zn(2+). The disordered stretch occupies residues 184–225; the sequence is QREEPEDAVSATPSAPAHGSPELLRSRRETQPEDVSEPGAKD. The segment at 239–273 adopts an RING-type zinc-finger fold; the sequence is CKVCLDRAVSIVFVPCGHFVCTECAPNLQLCPICR.

The protein belongs to the IAP family. Binds to caspase-9. Interaction with DIABLO/SMAC via the BIR domain disrupts binding to caspase-9 and apoptotic suppressor activity. Interacts with TAB1. In vitro, interacts with caspase-3 and caspase-7 via its BIR domain. In terms of processing, autoubiquitinated and undergoes proteasome-mediated degradation. Post-translationally, the truncated protein (tLivin) not only loses its anti-apoptotic effect but also acquires a pro-apoptotic effect.

It is found in the nucleus. The protein resides in the cytoplasm. It localises to the golgi apparatus. The catalysed reaction is S-ubiquitinyl-[E2 ubiquitin-conjugating enzyme]-L-cysteine + [acceptor protein]-L-lysine = [E2 ubiquitin-conjugating enzyme]-L-cysteine + N(6)-ubiquitinyl-[acceptor protein]-L-lysine.. Apoptotic regulator capable of exerting proapoptotic and anti-apoptotic activities and plays crucial roles in apoptosis, cell proliferation, and cell cycle control. Its anti-apoptotic activity is mediated through the inhibition of CASP3, CASP7 and CASP9, as well as by its E3 ubiquitin-protein ligase activity. As it is a weak caspase inhibitor, its anti-apoptotic activity is thought to be due to its ability to ubiquitinate DIABLO/SMAC targeting it for degradation thereby promoting cell survival. May contribute to caspase inhibition, by blocking the ability of DIABLO/SMAC to disrupt XIAP/BIRC4-caspase interactions. Protects against apoptosis induced by TNF or by chemical agents such as adriamycin, etoposide or staurosporine. Suppression of apoptosis is mediated by activation of MAPK8/JNK1, and possibly also of MAPK9/JNK2. This activation depends on TAB1 and MAP3K7/TAK1. In vitro, inhibits CASP3 and proteolytic activation of pro-CASP9. This is Baculoviral IAP repeat-containing protein 7 (Birc7) from Mus musculus (Mouse).